The chain runs to 600 residues: Aspartate--tRNA(Asp/Asn) ligase (600 aa).

L-aspartate is bound at residue E174. The tract at residues 198–201 (QLFK) is aspartate. Residue R220 coordinates L-aspartate. ATP is bound by residues 220-222 (RDE) and Q229. An L-aspartate-binding site is contributed by H457. E491 serves as a coordination point for ATP. An L-aspartate-binding site is contributed by R498. 543 to 546 (GLDR) provides a ligand contact to ATP.

It belongs to the class-II aminoacyl-tRNA synthetase family. Type 1 subfamily. As to quaternary structure, homodimer.

The protein resides in the cytoplasm. The enzyme catalyses tRNA(Asx) + L-aspartate + ATP = L-aspartyl-tRNA(Asx) + AMP + diphosphate. In terms of biological role, aspartyl-tRNA synthetase with relaxed tRNA specificity since it is able to aspartylate not only its cognate tRNA(Asp) but also tRNA(Asn). Reaction proceeds in two steps: L-aspartate is first activated by ATP to form Asp-AMP and then transferred to the acceptor end of tRNA(Asp/Asn). The sequence is that of Aspartate--tRNA(Asp/Asn) ligase from Burkholderia orbicola (strain AU 1054).